A 377-amino-acid polypeptide reads, in one-letter code: 3-dehydroquinate synthase (377 aa).

NAD(+) is bound by residues 115–119 (GVIGD), 139–140 (TS), K152, and K161. Zn(2+)-binding residues include E194, H256, and H275.

Belongs to the sugar phosphate cyclases superfamily. Dehydroquinate synthase family. NAD(+) is required as a cofactor. Requires Co(2+) as cofactor. Zn(2+) serves as cofactor.

Its subcellular location is the cytoplasm. It carries out the reaction 7-phospho-2-dehydro-3-deoxy-D-arabino-heptonate = 3-dehydroquinate + phosphate. It functions in the pathway metabolic intermediate biosynthesis; chorismate biosynthesis; chorismate from D-erythrose 4-phosphate and phosphoenolpyruvate: step 2/7. Its function is as follows. Catalyzes the conversion of 3-deoxy-D-arabino-heptulosonate 7-phosphate (DAHP) to dehydroquinate (DHQ). The protein is 3-dehydroquinate synthase of Agrobacterium fabrum (strain C58 / ATCC 33970) (Agrobacterium tumefaciens (strain C58)).